The sequence spans 156 residues: Small ribosomal subunit protein uS7 (156 aa).

This sequence belongs to the universal ribosomal protein uS7 family. In terms of assembly, part of the 30S ribosomal subunit. Contacts proteins S9 and S11.

In terms of biological role, one of the primary rRNA binding proteins, it binds directly to 16S rRNA where it nucleates assembly of the head domain of the 30S subunit. Is located at the subunit interface close to the decoding center, probably blocks exit of the E-site tRNA. In Bacillus velezensis (strain DSM 23117 / BGSC 10A6 / LMG 26770 / FZB42) (Bacillus amyloliquefaciens subsp. plantarum), this protein is Small ribosomal subunit protein uS7.